Consider the following 635-residue polypeptide: tRNA 5-methylaminomethyl-2-thiouridine biosynthesis bifunctional protein MnmC (635 aa).

The tract at residues 1-227 (MSEPIDWLPD…KRSNLQAEFD (227 aa)) is tRNA (mnm(5)s(2)U34)-methyltransferase. Residues 254-635 (IGGGLSGAAV…ALSTERLPAD (382 aa)) are FAD-dependent cmnm(5)s(2)U34 oxidoreductase.

It in the N-terminal section; belongs to the methyltransferase superfamily. tRNA (mnm(5)s(2)U34)-methyltransferase family. In the C-terminal section; belongs to the DAO family. It depends on FAD as a cofactor.

The protein localises to the cytoplasm. The enzyme catalyses 5-aminomethyl-2-thiouridine(34) in tRNA + S-adenosyl-L-methionine = 5-methylaminomethyl-2-thiouridine(34) in tRNA + S-adenosyl-L-homocysteine + H(+). Its function is as follows. Catalyzes the last two steps in the biosynthesis of 5-methylaminomethyl-2-thiouridine (mnm(5)s(2)U) at the wobble position (U34) in tRNA. Catalyzes the FAD-dependent demodification of cmnm(5)s(2)U34 to nm(5)s(2)U34, followed by the transfer of a methyl group from S-adenosyl-L-methionine to nm(5)s(2)U34, to form mnm(5)s(2)U34. In Paracidovorax citrulli (strain AAC00-1) (Acidovorax citrulli), this protein is tRNA 5-methylaminomethyl-2-thiouridine biosynthesis bifunctional protein MnmC.